The following is a 137-amino-acid chain: MKLGSAIPWALLLSTXTLVSTAQNKGSDDCGGFLKNYSGWISYYKALTTNCVWTIEMKPGHKIILQILPLNLWTIEMKLEVRDQRAGPDNFLKVCGGTTFVYQSSSNVATVKYSRESHHPASSFNVYFYGIPQGAKA.

Positions 1–21 are cleaved as a signal peptide; it reads MKLGSAIPWALLLSTXTLVST. Cysteine 30 and cysteine 51 are disulfide-bonded. The 102-residue stretch at 30–131 folds into the CUB domain; that stretch reads CGGFLKNYSG…SSFNVYFYGI (102 aa). N-linked (GlcNAc...) asparagine glycosylation is present at asparagine 36.

The protein belongs to the spermadhesin family. In terms of tissue distribution, seminal plasma or sperm.

It is found in the secreted. Functionally, inhibitor of sperm motility. The chain is Seminal plasma sperm motility inhibitor (SPMI) from Sus scrofa (Pig).